The primary structure comprises 254 residues: Glucosamine-6-phosphate deaminase (254 aa).

Aspartate 63 acts as the Proton acceptor; for enolization step in catalysis. The active-site For ring-opening step is asparagine 129. Catalysis depends on histidine 131, which acts as the Proton acceptor; for ring-opening step. Residue glutamate 136 is the For ring-opening step of the active site.

It belongs to the glucosamine/galactosamine-6-phosphate isomerase family. NagB subfamily.

It catalyses the reaction alpha-D-glucosamine 6-phosphate + H2O = beta-D-fructose 6-phosphate + NH4(+). The protein operates within amino-sugar metabolism; N-acetylneuraminate degradation; D-fructose 6-phosphate from N-acetylneuraminate: step 5/5. In terms of biological role, catalyzes the reversible isomerization-deamination of glucosamine 6-phosphate (GlcN6P) to form fructose 6-phosphate (Fru6P) and ammonium ion. The chain is Glucosamine-6-phosphate deaminase from Exiguobacterium sp. (strain ATCC BAA-1283 / AT1b).